The primary structure comprises 154 residues: Myoglobin (154 aa).

Positions glycine 2–lysine 148 constitute a Globin domain. Serine 4 carries the phosphoserine modification. Threonine 68 is subject to Phosphothreonine. Histidine 94 is a binding site for heme b.

The protein belongs to the globin family. Monomeric.

The protein localises to the cytoplasm. It is found in the sarcoplasm. The enzyme catalyses Fe(III)-heme b-[protein] + nitric oxide + H2O = Fe(II)-heme b-[protein] + nitrite + 2 H(+). It carries out the reaction H2O2 + AH2 = A + 2 H2O. Functionally, monomeric heme protein which primary function is to store oxygen and facilitate its diffusion within muscle tissues. Reversibly binds oxygen through a pentacoordinated heme iron and enables its timely and efficient release as needed during periods of heightened demand. Depending on the oxidative conditions of tissues and cells, and in addition to its ability to bind oxygen, it also has a nitrite reductase activity whereby it regulates the production of bioactive nitric oxide. Under stress conditions, like hypoxia and anoxia, it also protects cells against reactive oxygen species thanks to its pseudoperoxidase activity. The sequence is that of Myoglobin (MB) from Elephas maximus (Indian elephant).